The sequence spans 315 residues: 4-hydroxy-3-methylbut-2-enyl diphosphate reductase (315 aa).

Position 12 (Cys12) interacts with [4Fe-4S] cluster. Positions 41 and 74 each coordinate (2E)-4-hydroxy-3-methylbut-2-enyl diphosphate. The dimethylallyl diphosphate site is built by His41 and His74. Residues His41 and His74 each coordinate isopentenyl diphosphate. Cys96 provides a ligand contact to [4Fe-4S] cluster. A (2E)-4-hydroxy-3-methylbut-2-enyl diphosphate-binding site is contributed by His124. A dimethylallyl diphosphate-binding site is contributed by His124. Position 124 (His124) interacts with isopentenyl diphosphate. Catalysis depends on Glu126, which acts as the Proton donor. Thr168 contacts (2E)-4-hydroxy-3-methylbut-2-enyl diphosphate. Residue Cys198 coordinates [4Fe-4S] cluster. Residues Ser226, Ser227, Asn228, and Ser270 each contribute to the (2E)-4-hydroxy-3-methylbut-2-enyl diphosphate site. Ser226, Ser227, Asn228, and Ser270 together coordinate dimethylallyl diphosphate. Isopentenyl diphosphate contacts are provided by Ser226, Ser227, Asn228, and Ser270.

The protein belongs to the IspH family. It depends on [4Fe-4S] cluster as a cofactor.

The enzyme catalyses isopentenyl diphosphate + 2 oxidized [2Fe-2S]-[ferredoxin] + H2O = (2E)-4-hydroxy-3-methylbut-2-enyl diphosphate + 2 reduced [2Fe-2S]-[ferredoxin] + 2 H(+). It carries out the reaction dimethylallyl diphosphate + 2 oxidized [2Fe-2S]-[ferredoxin] + H2O = (2E)-4-hydroxy-3-methylbut-2-enyl diphosphate + 2 reduced [2Fe-2S]-[ferredoxin] + 2 H(+). Its pathway is isoprenoid biosynthesis; dimethylallyl diphosphate biosynthesis; dimethylallyl diphosphate from (2E)-4-hydroxy-3-methylbutenyl diphosphate: step 1/1. The protein operates within isoprenoid biosynthesis; isopentenyl diphosphate biosynthesis via DXP pathway; isopentenyl diphosphate from 1-deoxy-D-xylulose 5-phosphate: step 6/6. Its function is as follows. Catalyzes the conversion of 1-hydroxy-2-methyl-2-(E)-butenyl 4-diphosphate (HMBPP) into a mixture of isopentenyl diphosphate (IPP) and dimethylallyl diphosphate (DMAPP). Acts in the terminal step of the DOXP/MEP pathway for isoprenoid precursor biosynthesis. In Pseudomonas fluorescens (strain SBW25), this protein is 4-hydroxy-3-methylbut-2-enyl diphosphate reductase.